Here is a 257-residue protein sequence, read N- to C-terminus: Ribosomal RNA small subunit methyltransferase J (257 aa).

Residues 109-110, 125-126, and D179 each bind S-adenosyl-L-methionine; these read RD and ER.

Belongs to the methyltransferase superfamily. RsmJ family.

The protein localises to the cytoplasm. The enzyme catalyses guanosine(1516) in 16S rRNA + S-adenosyl-L-methionine = N(2)-methylguanosine(1516) in 16S rRNA + S-adenosyl-L-homocysteine + H(+). Its function is as follows. Specifically methylates the guanosine in position 1516 of 16S rRNA. This chain is Ribosomal RNA small subunit methyltransferase J, found in Actinobacillus succinogenes (strain ATCC 55618 / DSM 22257 / CCUG 43843 / 130Z).